We begin with the raw amino-acid sequence, 123 residues long: Small ribosomal subunit protein uS12c (123 aa).

This sequence belongs to the universal ribosomal protein uS12 family. Part of the 30S ribosomal subunit.

It is found in the plastid. It localises to the chloroplast. Functionally, with S4 and S5 plays an important role in translational accuracy. Located at the interface of the 30S and 50S subunits. This chain is Small ribosomal subunit protein uS12c (rps12), found in Oenothera elata subsp. hookeri (Hooker's evening primrose).